The primary structure comprises 123 residues: uncharacterized protein (123 aa).

Helical transmembrane passes span 53–73 (VWFLFLFFIASHINILFFFFL) and 75–95 (VLWFLWCYLCSGLFLFDVFSH).

The protein localises to the membrane. This is an uncharacterized protein from Saccharomyces cerevisiae (strain ATCC 204508 / S288c) (Baker's yeast).